The following is a 443-amino-acid chain: ATP-dependent protease ATPase subunit HslU (443 aa).

ATP is bound by residues Ile-18, 60-65, Asp-256, Glu-321, and Arg-393; that span reads GVGKTE.

It belongs to the ClpX chaperone family. HslU subfamily. A double ring-shaped homohexamer of HslV is capped on each side by a ring-shaped HslU homohexamer. The assembly of the HslU/HslV complex is dependent on binding of ATP.

The protein resides in the cytoplasm. In terms of biological role, ATPase subunit of a proteasome-like degradation complex; this subunit has chaperone activity. The binding of ATP and its subsequent hydrolysis by HslU are essential for unfolding of protein substrates subsequently hydrolyzed by HslV. HslU recognizes the N-terminal part of its protein substrates and unfolds these before they are guided to HslV for hydrolysis. The sequence is that of ATP-dependent protease ATPase subunit HslU from Escherichia coli O17:K52:H18 (strain UMN026 / ExPEC).